The chain runs to 449 residues: Glucose-6-phosphate isomerase 1 (449 aa).

Threonine 38 is subject to Phosphothreonine. The active-site Proton donor is glutamate 290. Catalysis depends on residues histidine 311 and lysine 425.

This sequence belongs to the GPI family. Homodimer.

The protein resides in the cytoplasm. The catalysed reaction is alpha-D-glucose 6-phosphate = beta-D-fructose 6-phosphate. It participates in carbohydrate biosynthesis; gluconeogenesis. The protein operates within carbohydrate degradation; glycolysis; D-glyceraldehyde 3-phosphate and glycerone phosphate from D-glucose: step 2/4. In terms of biological role, catalyzes the reversible isomerization of glucose-6-phosphate to fructose-6-phosphate. The chain is Glucose-6-phosphate isomerase 1 from Geobacillus stearothermophilus (Bacillus stearothermophilus).